The primary structure comprises 1014 residues: MIYLHRIYFIIVLFTLIFHGRLGFSDNNKLHEAEVRALKEIGKKLGKKDWDFNKDPCSGEGTWIVTTYTTKGFESNITCDCSFLPQNSSCHVIRIALKSQNLTGIVPPEFSKLRHLKVLDLSRNSLTGSIPKEWASMRLEDLSFMGNRLSGPFPKVLTRLTMLRNLSLEGNQFSGPIPPDIGQLVHLEKLHLPSNAFTGPLTEKLGLLKNLTDMRISDNNFTGPIPDFISNWTRILKLQMHGCGLDGPIPSSISSLTSLTDLRISDLGGKPSSFPPLKNLESIKTLILRKCKIIGPIPKYIGDLKKLKTLDLSFNLLSGEIPSSFENMKKADFIYLTGNKLTGGVPNYFVERNKNVDVSFNNFTDESSIPSHDCNRVTSNLVESFALGNKSHKGSTCFLQRMPCVHPKRYHLYKLYINCGGGEVKVDKEITYQADDEPKGASMYVLGANKRWALSSTGNFMDNDDDADEYTVQNTSRLSVNASSPSFGLYRTARVSPLSLTYYGICLGNGNYTVNLHFAEIIFTDDNTLYSLGKRLFDIYVQDQLVIKNFNIQEAARGSGKPIIKSFLVNVTDHTLKIGLRWAGKGTTGIPIRGVYGPMISAISVEPNFKPPVYYDTKDIILKVGVPVAAATLLLFIIVGVFWKKRRDKNDIDKELRGLDLQTGTFTLRQIKAATDNFDVTRKIGEGGFGSVYKGELSEGKLIAVKQLSAKSRQGNREFVNEIGMISALQHPNLVKLYGCCVEGNQLILVYEYLENNCLSRALFGKDESSRLKLDWSTRKKIFLGIAKGLTFLHEESRIKIVHRDIKASNVLLDKDLNAKISDFGLAKLNDDGNTHISTRIAGTIGYMAPEYAMRGYLTEKADVYSFGVVALEIVSGKSNTNFRPTEDFVYLLDWAYVLQERGSLLELVDPTLASDYSEEEAMLMLNVALMCTNASPTLRPTMSQVVSLIEGKTAMQELLSDPSFSTVNPKLKALRNHFWQNELSRSLSFSTSGPRTASANSLVDAEEKTGLLD.

The signal sequence occupies residues 1–23 (MIYLHRIYFIIVLFTLIFHGRLG). Topologically, residues 24 to 619 (FSDNNKLHEA…KPPVYYDTKD (596 aa)) are extracellular. N-linked (GlcNAc...) asparagine glycans are attached at residues N76, N87, and N101. LRR repeat units follow at residues 89-112 (SCHV…EFSK), 113-137 (LRHL…WASM), 139-160 (LEDL…LTRL), 161-184 (TMLR…IGQL), 186-207 (HLEK…KLGL), 208-234 (LKNL…NWTR), 256-279 (LTSL…PLKN), 280-304 (LESI…IGDL), 305-327 (KKLK…SFEN), 329-352 (KKAD…FVER), and 354-376 (KNVD…DCNR). N-linked (GlcNAc...) asparagine glycosylation is present at N165. N210, N220, and N231 each carry an N-linked (GlcNAc...) asparagine glycan. N-linked (GlcNAc...) asparagine glycans are attached at residues N362, N389, N474, N481, and N511. An LRR 12 repeat occupies 516–539 (LHFAEIIFTDDNTLYSLGKRLFDI). N570 is a glycosylation site (N-linked (GlcNAc...) asparagine). A helical transmembrane segment spans residues 620–640 (IILKVGVPVAAATLLLFIIVG). The Cytoplasmic portion of the chain corresponds to 641–1014 (VFWKKRRDKN…DAEEKTGLLD (374 aa)). A Phosphothreonine modification is found at T667. Residues 678–960 (FDVTRKIGEG…EGKTAMQELL (283 aa)) enclose the Protein kinase domain. ATP is bound by residues 684 to 692 (IGEGGFGSV) and K706. At Y751 the chain carries Phosphotyrosine. The Proton acceptor role is filled by D805. Residues S809 and S838 each carry the phosphoserine modification. Phosphothreonine occurs at positions 839 and 844. Y852 carries the phosphotyrosine modification. S989 is modified (phosphoserine). Over residues 989 to 1002 (SFSTSGPRTASANS) the composition is skewed to polar residues. Positions 989-1014 (SFSTSGPRTASANSLVDAEEKTGLLD) are disordered.

It belongs to the protein kinase superfamily. Ser/Thr protein kinase family.

It is found in the membrane. It carries out the reaction L-seryl-[protein] + ATP = O-phospho-L-seryl-[protein] + ADP + H(+). It catalyses the reaction L-threonyl-[protein] + ATP = O-phospho-L-threonyl-[protein] + ADP + H(+). The chain is Probable LRR receptor-like serine/threonine-protein kinase At1g07650 from Arabidopsis thaliana (Mouse-ear cress).